We begin with the raw amino-acid sequence, 612 residues long: Dihydroxy-acid dehydratase (612 aa).

D81 serves as a coordination point for Mg(2+). Position 122 (C122) interacts with [2Fe-2S] cluster. 2 residues coordinate Mg(2+): D123 and K124. The residue at position 124 (K124) is an N6-carboxylysine. Position 195 (C195) interacts with [2Fe-2S] cluster. E492 contributes to the Mg(2+) binding site. S518 acts as the Proton acceptor in catalysis.

It belongs to the IlvD/Edd family. In terms of assembly, homodimer. The cofactor is [2Fe-2S] cluster. Mg(2+) is required as a cofactor.

The enzyme catalyses (2R)-2,3-dihydroxy-3-methylbutanoate = 3-methyl-2-oxobutanoate + H2O. It catalyses the reaction (2R,3R)-2,3-dihydroxy-3-methylpentanoate = (S)-3-methyl-2-oxopentanoate + H2O. Its pathway is amino-acid biosynthesis; L-isoleucine biosynthesis; L-isoleucine from 2-oxobutanoate: step 3/4. It functions in the pathway amino-acid biosynthesis; L-valine biosynthesis; L-valine from pyruvate: step 3/4. Functions in the biosynthesis of branched-chain amino acids. Catalyzes the dehydration of (2R,3R)-2,3-dihydroxy-3-methylpentanoate (2,3-dihydroxy-3-methylvalerate) into 2-oxo-3-methylpentanoate (2-oxo-3-methylvalerate) and of (2R)-2,3-dihydroxy-3-methylbutanoate (2,3-dihydroxyisovalerate) into 2-oxo-3-methylbutanoate (2-oxoisovalerate), the penultimate precursor to L-isoleucine and L-valine, respectively. This Kocuria rhizophila (strain ATCC 9341 / DSM 348 / NBRC 103217 / DC2201) protein is Dihydroxy-acid dehydratase.